Reading from the N-terminus, the 326-residue chain is Putative HTH-type transcriptional regulatory protein MmarC5_0898 (326 aa).

The HTH cro/C1-type domain occupies 128 to 183; that stretch reads LRETREKLKISVGELAEISRVSRKTIYKYEQNEANPSAEVAIKIEEYLDVPLIKGI. Positions 139 to 158 form a DNA-binding region, H-T-H motif; sequence VGELAEISRVSRKTIYKYEQ.

In Methanococcus maripaludis (strain C5 / ATCC BAA-1333), this protein is Putative HTH-type transcriptional regulatory protein MmarC5_0898.